Here is a 144-residue protein sequence, read N- to C-terminus: Small ribosomal subunit protein uS12 (144 aa).

Residues 1–55 (MPTINQLVRKGREDKVVKSKSPALQKGYNSFKKSQTNQSSPQKRGVCTRVGTMTP) are disordered. Over residues 27 to 42 (GYNSFKKSQTNQSSPQ) the composition is skewed to polar residues. A 3-methylthioaspartic acid modification is found at D102. The tract at residues 119–144 (GVNNRKQGRSKYGTKRPKPGQAAAKK) is disordered. A compositionally biased stretch (basic residues) spans 124 to 144 (KQGRSKYGTKRPKPGQAAAKK).

The protein belongs to the universal ribosomal protein uS12 family. Part of the 30S ribosomal subunit. Contacts proteins S8 and S17. May interact with IF1 in the 30S initiation complex.

Functionally, with S4 and S5 plays an important role in translational accuracy. In terms of biological role, interacts with and stabilizes bases of the 16S rRNA that are involved in tRNA selection in the A site and with the mRNA backbone. Located at the interface of the 30S and 50S subunits, it traverses the body of the 30S subunit contacting proteins on the other side and probably holding the rRNA structure together. The combined cluster of proteins S8, S12 and S17 appears to hold together the shoulder and platform of the 30S subunit. This Brevibacillus brevis (strain 47 / JCM 6285 / NBRC 100599) protein is Small ribosomal subunit protein uS12.